The chain runs to 282 residues: 4-diphosphocytidyl-2-C-methyl-D-erythritol kinase (282 aa).

K15 is an active-site residue. Residue 98 to 108 (PMGGGVGGGSS) participates in ATP binding. The active site involves D140.

Belongs to the GHMP kinase family. IspE subfamily.

It carries out the reaction 4-CDP-2-C-methyl-D-erythritol + ATP = 4-CDP-2-C-methyl-D-erythritol 2-phosphate + ADP + H(+). Its pathway is isoprenoid biosynthesis; isopentenyl diphosphate biosynthesis via DXP pathway; isopentenyl diphosphate from 1-deoxy-D-xylulose 5-phosphate: step 3/6. Functionally, catalyzes the phosphorylation of the position 2 hydroxy group of 4-diphosphocytidyl-2C-methyl-D-erythritol. The chain is 4-diphosphocytidyl-2-C-methyl-D-erythritol kinase from Azoarcus sp. (strain BH72).